The sequence spans 189 residues: Protein jagunal homolog (189 aa).

Residues 1–34 (MSSRGVRAAGTDGNDFQNRQRIAQHYQESAQYKS) are Cytoplasmic-facing. Residues 35-55 (VLKWFFVPHFLILVFMWLKVG) traverse the membrane as a helical segment. The Lumenal portion of the chain corresponds to 56 to 75 (SEFLRYNFGWKNAFFERLDM). Residues 76 to 96 (PAAYPWEYVWCLSFIPIVLAL) form a helical membrane-spanning segment. The Cytoplasmic portion of the chain corresponds to 97–105 (SSFQRNKLK). Residues 106 to 126 (VLHYAYYAEFICGIFPCMIGL) form a helical membrane-spanning segment. Topologically, residues 127 to 150 (GGQLPELLEYANDMEGSNTPTFKG) are lumenal. Residues 151–171 (IFPMVIIWYIFFAVALQIHGF) form a helical membrane-spanning segment. Over 172 to 189 (SMYFMHHLAAAWAPVKRD) the chain is Cytoplasmic.

Belongs to the jagunal family.

Its subcellular location is the endoplasmic reticulum membrane. The protein is Protein jagunal homolog of Caenorhabditis briggsae.